A 252-amino-acid polypeptide reads, in one-letter code: MSGHSKFKNIQHRKGAQDKKKSKVFTKLIREIVTAVKTGASNVPENNPRLRKALNAARSQNLPKERIDKAINSANDASNTESYTEIRYEGYAPNGIAIIIEALTDNKNRTASEVRSSFTKYGGILGETGSVNYLFNHCGVIQYPINIASNEDIFEAAIEAGGNDIISNDFAHTIYTDIENFYKALGFLTDKYGIPEDSYIGWIPVNTIIIDDKEKAKKLLKLIEVLEENDDVQRVFGNYMLSEDVYEIIQEE.

Residues 1-22 (MSGHSKFKNIQHRKGAQDKKKS) form a disordered region.

Belongs to the TACO1 family.

The protein resides in the cytoplasm. The chain is Probable transcriptional regulatory protein RT0442 from Rickettsia typhi (strain ATCC VR-144 / Wilmington).